Reading from the N-terminus, the 325-residue chain is MAVENNTQRSYSIIPCFIFVELVIMAGTVLLAYYFECTDTFQVHIQGFFCQDGDLMKPYPGTEEESFISPLVLYCVLAATPTAIIFIGEISMYFIKSTRESLIAEEKMILTGDCCYLSPLLRRIIRFIGVFAFGLFATDIFVNAGQVVTGHLTPYFLTVCQPNYTSTDCRAHQQFINNGNICTGDLEVIEKARRSFPSKHAALSIYSALYATMYITSTIKTKSSRLAKPVLCLGTLCTAFLTGLNRVSEYRNHCSDVIAGFILGTAVALFLGMCVVHNFRGTQGSPSKPKPEDPRGVPLMAFPRIESPLETLSAQNHSASMTEVT.

Residue Asn5 is glycosylated (N-linked (GlcNAc...) asparagine). 3 helical membrane-spanning segments follow: residues 13–33, 67–87, and 127–147; these read IIPCFIFVELVIMAGTVLLAY, FISPLVLYCVLAATPTAIIFI, and FIGVFAFGLFATDIFVNAGQV. N-linked (GlcNAc...) asparagine glycosylation is present at Asn163. Helical transmembrane passes span 201–218, 230–247, and 257–277; these read AALSIYSALYATMYITST, VLCLGTLCTAFLTGLNRV, and VIAGFILGTAVALFLGMCVVH. Ser307 is modified (phosphoserine). N-linked (GlcNAc...) asparagine glycosylation is present at Asn316.

It belongs to the PA-phosphatase related phosphoesterase family.

The protein localises to the cell membrane. It localises to the cell projection. Its subcellular location is the neuron projection. In terms of biological role, may play a role in neurite outgrowth and neurogenesis. In Mus musculus (Mouse), this protein is Phospholipid phosphatase-related protein type 1.